Consider the following 516-residue polypeptide: GMP synthase [glutamine-hydrolyzing] (516 aa).

The Glutamine amidotransferase type-1 domain maps to 5–199 (PIVILDFGSQ…ARKICGITSK (195 aa)). Residue cysteine 82 is the Nucleophile of the active site. Catalysis depends on residues histidine 173 and glutamate 175. In terms of domain architecture, GMPS ATP-PPase spans 200-391 (WDMGHFAKEQ…LGLPREMVYR (192 aa)). ATP is bound at residue 227–233 (SGGVDSS).

In terms of assembly, homodimer.

It catalyses the reaction XMP + L-glutamine + ATP + H2O = GMP + L-glutamate + AMP + diphosphate + 2 H(+). The protein operates within purine metabolism; GMP biosynthesis; GMP from XMP (L-Gln route): step 1/1. Its function is as follows. Catalyzes the synthesis of GMP from XMP. In Nitratiruptor sp. (strain SB155-2), this protein is GMP synthase [glutamine-hydrolyzing].